The chain runs to 173 residues: Aliphatic sulfonate oxidoreductase, polyferredoxin-like subunit (173 aa).

4Fe-4S ferredoxin-type domains lie at 9–40 (IWIL…WPEA), 48–80 (LFPG…VDEK), and 82–111 (GAVV…IPAG). 16 residues coordinate [4Fe-4S] cluster: Cys18, Cys21, Cys24, Cys28, Cys58, Cys61, Cys66, Cys70, Cys91, Cys94, Cys97, Cys101, Cys118, Cys121, Cys127, and Cys131.

Heterodimer composed of a small WOR5-S subunit, with four [4Fe-4S] clusters, and a large WOR5-L subunit, containing the active site tungsto-bispyranopterin cofactor as well as another [4Fe-4S] cluster. [4Fe-4S] cluster serves as cofactor.

It localises to the cytoplasm. Its function is as follows. Polyferredoxin-like subunit of an oxidoreductase that can desulfonate and oxidize aliphatic sulfonates such as taurine. May serve as a an electron-transfer subunit between the catalytic subunit and ferredoxin. This is Aliphatic sulfonate oxidoreductase, polyferredoxin-like subunit from Pyrococcus furiosus (strain ATCC 43587 / DSM 3638 / JCM 8422 / Vc1).